A 101-amino-acid chain; its full sequence is Floral defensin-like protein 2 (101 aa).

A signal peptide spans 1–25 (MARSICFFAVAILALMLFAAYETEA). 5 cysteine pairs are disulfide-bonded: C28–C74, C32–C48, C39–C61, C45–C68, and C49–C70. Residues 75–101 (ATEEATATLANEVKTMAEALVEEDMME) constitute a propeptide, removed in mature form.

It belongs to the DEFL family. When compared to other plant defensins, the petunia defensins have an additional fifth disulfide bond. In terms of tissue distribution, petals.

The protein localises to the secreted. Its subcellular location is the vacuole. Plant defense peptide with antifungal activity against F.oxysporum and B.cinerea. The chain is Floral defensin-like protein 2 (D2) from Petunia hybrida (Petunia).